Consider the following 343-residue polypeptide: Arginine N-succinyltransferase (343 aa).

Residue Leu125 coordinates succinyl-CoA. The active-site Proton donor is His229.

It belongs to the arginine N-succinyltransferase family.

It carries out the reaction succinyl-CoA + L-arginine = N(2)-succinyl-L-arginine + CoA + H(+). The protein operates within amino-acid degradation; L-arginine degradation via AST pathway; L-glutamate and succinate from L-arginine: step 1/5. Its function is as follows. Catalyzes the transfer of succinyl-CoA to arginine to produce N(2)-succinylarginine. This chain is Arginine N-succinyltransferase, found in Photorhabdus laumondii subsp. laumondii (strain DSM 15139 / CIP 105565 / TT01) (Photorhabdus luminescens subsp. laumondii).